We begin with the raw amino-acid sequence, 257 residues long: Gamma-secretase subunit APH-1B (257 aa).

Helical transmembrane passes span 5–25 (VFFG…VFTI), 32–52 (VIFL…SSVF), 66–86 (PVQN…QELF), 115–135 (LLAY…SFVN), 160–180 (AFMT…FFDG), 186–206 (WYTL…TFLS), and 213–233 (LVTA…VAGG).

The protein belongs to the APH-1 family. As to quaternary structure, probable component of the gamma-secretase complex, a complex composed of a presenilin homodimer (PSEN1 or PSEN2), nicastrin (NCSTN), APH1 (APH1A or APH1B) and PEN2. Such minimal complex is sufficient for secretase activity, although other components may exist. Interacts with PSEN1 and PSEN2.

It localises to the membrane. Its function is as follows. Probable subunit of the gamma-secretase complex, an endoprotease complex that catalyzes the intramembrane cleavage of integral proteins such as Notch receptors and APP (amyloid-beta precursor protein). It probably represents a stabilizing cofactor for the presenilin homodimer that promotes the formation of a stable complex. Probably present in a minority of gamma-secretase complexes compared to APH1A. The chain is Gamma-secretase subunit APH-1B (Aph1b) from Mus musculus (Mouse).